A 588-amino-acid chain; its full sequence is DNA ligase (588 aa).

E248 serves as a coordination point for ATP. Residue K250 is the N6-AMP-lysine intermediate of the active site. Positions 255, 270, 300, 341, 418, and 424 each coordinate ATP.

Belongs to the ATP-dependent DNA ligase family. The cofactor is Mg(2+).

It carries out the reaction ATP + (deoxyribonucleotide)n-3'-hydroxyl + 5'-phospho-(deoxyribonucleotide)m = (deoxyribonucleotide)n+m + AMP + diphosphate.. Functionally, DNA ligase that seals nicks in double-stranded DNA during DNA replication, DNA recombination and DNA repair. The polypeptide is DNA ligase (Thermoplasma volcanium (strain ATCC 51530 / DSM 4299 / JCM 9571 / NBRC 15438 / GSS1)).